We begin with the raw amino-acid sequence, 353 residues long: Photosystem II D2 protein (353 aa).

Thr-2 bears the N-acetylthreonine mark. At Thr-2 the chain carries Phosphothreonine. The chain crosses the membrane as a helical span at residues 41–61; that stretch reads CAYFALGGWFTGTTFVTSWYT. His-118 is a chlorophyll a binding site. A helical transmembrane segment spans residues 125–141; the sequence is GFMLRQFELARSVQLRP. Gln-130 and Asn-143 together coordinate pheophytin a. A helical transmembrane segment spans residues 153-166; it reads VFVSVFLIYPLGQS. His-198 provides a ligand contact to chlorophyll a. The helical transmembrane segment at 208 to 228 threads the bilayer; that stretch reads AALLCAIHGATVENTLFEDGD. Positions 215 and 262 each coordinate a plastoquinone. His-215 contacts Fe cation. Position 269 (His-269) interacts with Fe cation. The chain crosses the membrane as a helical span at residues 279-295; sequence GSWMSAIGVVGLALNLR.

It belongs to the reaction center PufL/M/PsbA/D family. PSII is composed of 1 copy each of membrane proteins PsbA, PsbB, PsbC, PsbD, PsbE, PsbF, PsbH, PsbI, PsbJ, PsbK, PsbL, PsbM, PsbT, PsbX, PsbY, PsbZ, Psb30/Ycf12, at least 3 peripheral proteins of the oxygen-evolving complex and a large number of cofactors. It forms dimeric complexes. The D1/D2 heterodimer binds P680, chlorophylls that are the primary electron donor of PSII, and subsequent electron acceptors. It shares a non-heme iron and each subunit binds pheophytin, quinone, additional chlorophylls, carotenoids and lipids. There is also a Cl(-1) ion associated with D1 and D2, which is required for oxygen evolution. The PSII complex binds additional chlorophylls, carotenoids and specific lipids. serves as cofactor.

The protein resides in the plastid. It localises to the chloroplast thylakoid membrane. It catalyses the reaction 2 a plastoquinone + 4 hnu + 2 H2O = 2 a plastoquinol + O2. Photosystem II (PSII) is a light-driven water:plastoquinone oxidoreductase that uses light energy to abstract electrons from H(2)O, generating O(2) and a proton gradient subsequently used for ATP formation. It consists of a core antenna complex that captures photons, and an electron transfer chain that converts photonic excitation into a charge separation. The D1/D2 (PsbA/PsbD) reaction center heterodimer binds P680, the primary electron donor of PSII as well as several subsequent electron acceptors. D2 is needed for assembly of a stable PSII complex. This Pinus koraiensis (Korean pine) protein is Photosystem II D2 protein.